Consider the following 263-residue polypeptide: ATP synthase subunit a (263 aa).

6 helical membrane passes run Val26–Ser46, Val86–Ile106, Asp130–Ile150, Pro166–Ala186, Leu195–Ala215, and Leu229–Leu249.

This sequence belongs to the ATPase A chain family. As to quaternary structure, F-type ATPases have 2 components, CF(1) - the catalytic core - and CF(0) - the membrane proton channel. CF(1) has five subunits: alpha(3), beta(3), gamma(1), delta(1), epsilon(1). CF(0) has three main subunits: a(1), b(2) and c(9-12). The alpha and beta chains form an alternating ring which encloses part of the gamma chain. CF(1) is attached to CF(0) by a central stalk formed by the gamma and epsilon chains, while a peripheral stalk is formed by the delta and b chains.

It localises to the cell inner membrane. Key component of the proton channel; it plays a direct role in the translocation of protons across the membrane. The sequence is that of ATP synthase subunit a from Glaesserella parasuis serovar 5 (strain SH0165) (Haemophilus parasuis).